Reading from the N-terminus, the 302-residue chain is Transcription factor bHLH7 (302 aa).

Positions 124-154 (QPMSQPAPPMPHQQSTIRPRVRARRGQATDP) are disordered. The 50-residue stretch at 150-199 (QATDPHSIAERLRRERIAERIRSLQELVPTVNKTDRAAMIDEIVDYVKFL) folds into the bHLH domain.

In terms of assembly, homodimer. Expressed constitutively in roots, leaves, stems and flowers.

It localises to the nucleus. This chain is Transcription factor bHLH7 (BHLH7), found in Arabidopsis thaliana (Mouse-ear cress).